A 558-amino-acid polypeptide reads, in one-letter code: Type I restriction enzyme MjaIX methylase subunit (558 aa).

Residues 1–37 (MATLDKFLSIKENDEKTKKKESKKKSSKSNKTSESLV) are disordered. Residues 8–18 (LSIKENDEKTK) show a composition bias toward basic and acidic residues. Residues 19–28 (KKESKKKSSK) show a composition bias toward basic residues. S-adenosyl-L-methionine is bound by residues 227–232 (KFYTPR), 256–258 (SGG), and Asp-283.

It belongs to the N(4)/N(6)-methyltransferase family. As to quaternary structure, the type I restriction/modification system is composed of three polypeptides R, M and S.

It carries out the reaction a 2'-deoxyadenosine in DNA + S-adenosyl-L-methionine = an N(6)-methyl-2'-deoxyadenosine in DNA + S-adenosyl-L-homocysteine + H(+). The subtype gamma methyltransferase (M) subunit of a type I restriction enzyme. The M and S subunits together form a methyltransferase (MTase) that methylates A-3 on the top and A-2 on the bottom strand of the sequence 5'-CCAN(5)GTR-3'. In the presence of the R subunit the complex can also act as an endonuclease, binding to the same target sequence but cutting the DNA some distance from this site. Whether the DNA is cut or modified depends on the methylation state of the target sequence. When the target site is unmodified, the DNA is cut. When the target site is hemimethylated, the complex acts as a maintenance MTase modifying the DNA so that both strands become methylated. After locating a non-methylated recognition site, the enzyme complex serves as a molecular motor that translocates DNA in an ATP-dependent manner until a collision occurs that triggers cleavage. The protein is Type I restriction enzyme MjaIX methylase subunit of Methanocaldococcus jannaschii (strain ATCC 43067 / DSM 2661 / JAL-1 / JCM 10045 / NBRC 100440) (Methanococcus jannaschii).